The following is a 102-amino-acid chain: uncharacterized protein (102 aa).

This is an uncharacterized protein from Sulfolobus islandicus rod-shaped virus 1 (SIRV-1).